We begin with the raw amino-acid sequence, 590 residues long: Aspartate--tRNA(Asp/Asn) ligase (590 aa).

Position 175 (glutamate 175) interacts with L-aspartate. The tract at residues 199-202 is aspartate; the sequence is QQYK. L-aspartate-binding residues include arginine 221 and histidine 450. 221–223 is a binding site for ATP; the sequence is RDE. Residue glutamate 484 participates in ATP binding. Arginine 491 provides a ligand contact to L-aspartate. 536 to 539 lines the ATP pocket; the sequence is GIDR.

It belongs to the class-II aminoacyl-tRNA synthetase family. Type 1 subfamily. In terms of assembly, homodimer.

Its subcellular location is the cytoplasm. The catalysed reaction is tRNA(Asx) + L-aspartate + ATP = L-aspartyl-tRNA(Asx) + AMP + diphosphate. Its function is as follows. Aspartyl-tRNA synthetase with relaxed tRNA specificity since it is able to aspartylate not only its cognate tRNA(Asp) but also tRNA(Asn). Reaction proceeds in two steps: L-aspartate is first activated by ATP to form Asp-AMP and then transferred to the acceptor end of tRNA(Asp/Asn). The sequence is that of Aspartate--tRNA(Asp/Asn) ligase from Azorhizobium caulinodans (strain ATCC 43989 / DSM 5975 / JCM 20966 / LMG 6465 / NBRC 14845 / NCIMB 13405 / ORS 571).